Consider the following 386-residue polypeptide: Adiponectin receptor protein 2 (386 aa).

Residues 1-72 (MNEPAKHRLG…ECHDDNSQED (72 aa)) form a disordered region. Over 1–147 (MNEPAKHRLG…SIFRIHTETG (147 aa)) the chain is Cytoplasmic. Residues 15–31 (PEPDIRLRKGHQLDDTR) are compositionally biased toward basic and acidic residues. Positions 58-72 (SPEEPECHDDNSQED) are enriched in acidic residues. The chain crosses the membrane as a helical span at residues 148 to 168 (NIWTHLLGCVFFLCLGIFYMF). The Extracellular segment spans residues 169 to 181 (RPNISFVAPLQEK). Residues 182 to 202 (VVFGLFFLGAILCLSFSWLFH) form a helical membrane-spanning segment. H202 is a Zn(2+) binding site. The Cytoplasmic portion of the chain corresponds to 203 to 213 (TVYCHSEGVSR). Residues 214 to 234 (LFSKLDYSGIALLIMGSFVPW) form a helical membrane-spanning segment. The Extracellular segment spans residues 235–245 (LYYSFYCNPQP). The helical transmembrane segment at 246–266 (CFIYLIVICVLGIAAIIVSQW) threads the bilayer. Topologically, residues 267–273 (DMFATPQ) are cytoplasmic. The helical transmembrane segment at 274–294 (YRGVRAGVFVGLGLSGIIPTL) threads the bilayer. Topologically, residues 295-309 (HYVISEGFLKAATIG) are extracellular. Residues 310–330 (QIGWLMLMASLYITGAALYAA) traverse the membrane as a helical segment. Over 331–348 (RIPERFFPGKCDIWFHSH) the chain is Cytoplasmic. Residues H348 and H352 each coordinate Zn(2+). A helical membrane pass occupies residues 349–369 (QLFHIFVVAGAFVHFHGVSNL). Residues 370–386 (QEFRFMIGGGCTEEDAL) are Extracellular-facing.

Belongs to the ADIPOR family. In terms of assembly, may form homooligomers and heterooligomers with ADIPOR1. Interacts with APPL2 (via BAR domain); ADIPOQ dissociates this interaction. As to expression, detected in liver and quadriceps muscle (at protein level). Highly expressed in liver. Highly expressed in white adipose tissue, and at intermediate levels in brown adipose tissue. Expressed at intermediate level in heart, kidney, lung and skeletal muscle. Weakly expressed in brain, spleen and testis.

It is found in the cell membrane. In terms of biological role, receptor for ADIPOQ, an essential hormone secreted by adipocytes that regulates glucose and lipid metabolism. Required for normal body fat and glucose homeostasis. ADIPOQ-binding activates a signaling cascade that leads to increased PPARA activity, and ultimately to increased fatty acid oxidation and glucose uptake. Has intermediate affinity for globular and full-length adiponectin. Required for normal revascularization after chronic ischemia caused by severing of blood vessels. In Mus musculus (Mouse), this protein is Adiponectin receptor protein 2.